Consider the following 530-residue polypeptide: Proline--tRNA ligase, cytoplasmic (530 aa).

Belongs to the class-II aminoacyl-tRNA synthetase family.

It is found in the cytoplasm. The protein localises to the cytosol. It carries out the reaction tRNA(Pro) + L-proline + ATP = L-prolyl-tRNA(Pro) + AMP + diphosphate. Functionally, catalyzes the attachment of proline to tRNA(Pro) in a two-step reaction: proline is first activated by ATP to form Pro-AMP and then transferred to the acceptor end of tRNA(Pro). The polypeptide is Proline--tRNA ligase, cytoplasmic (Arabidopsis thaliana (Mouse-ear cress)).